A 75-amino-acid polypeptide reads, in one-letter code: Venom serine protease inhibitor BiVSPI (75 aa).

The signal sequence occupies residues 1–20 (MSRILFVFLAVMAIFSTSFG). 5 cysteine pairs are disulfide-bonded: C23–C55, C32–C51, C35–C47, C39–C75, and C57–C69. Positions 23–75 (CGLNEEFKSCGSCEPTCAKPRVTICTMECKIGCQCKSGYLRNGEGTCVLPEKC) constitute a TIL domain.

The protein belongs to the serine protease inhibitor-like (TIL domain-containing) family. In terms of processing, may be O-glycosylated. In terms of tissue distribution, expressed by the venom gland (at protein level) and expressed in fat body.

The protein localises to the secreted. It is found in the target cell membrane. Its function is as follows. Antimicrobial venom serine protease inhibitor. Exhibits inhibitory activity against chymotrypsin (IC(50)=19.56 nM, Ki=15.24 nM) and microbial serine proteases, such as subtilisin A (IC(50)=6.57 nM, Ki=6.83 nM) and proteinase K (IC(50)=7.11 nM, Ki=7.02 nM). Has not activity against trypsin, plasmin, tPA, thrombin, factor Xa or elastase. Binds and inhibits Gram-positive bacteria (B.subtilis (MIC=29.45 uM), B.thuringiensis (MIC=91.03 uM)) and the entomopathogenic fungus B.bassiana (MIC=30.09 uM) but not to E.coli. The sequence is that of Venom serine protease inhibitor BiVSPI from Bombus ignitus (Bumblebee).